Reading from the N-terminus, the 941-residue chain is Isoleucine--tRNA ligase (941 aa).

The 'HIGH' region motif lies at 59 to 69; it reads PYANGNIHIGH. Position 562 (Glu-562) interacts with L-isoleucyl-5'-AMP. The 'KMSKS' region motif lies at 603–607; it reads KMSKS. Lys-606 contacts ATP. The Zn(2+) site is built by Cys-904, Cys-907, Cys-924, and Cys-927.

It belongs to the class-I aminoacyl-tRNA synthetase family. IleS type 1 subfamily. As to quaternary structure, monomer. Zn(2+) is required as a cofactor.

It localises to the cytoplasm. The catalysed reaction is tRNA(Ile) + L-isoleucine + ATP = L-isoleucyl-tRNA(Ile) + AMP + diphosphate. Its function is as follows. Catalyzes the attachment of isoleucine to tRNA(Ile). As IleRS can inadvertently accommodate and process structurally similar amino acids such as valine, to avoid such errors it has two additional distinct tRNA(Ile)-dependent editing activities. One activity is designated as 'pretransfer' editing and involves the hydrolysis of activated Val-AMP. The other activity is designated 'posttransfer' editing and involves deacylation of mischarged Val-tRNA(Ile). The protein is Isoleucine--tRNA ligase of Haemophilus influenzae (strain ATCC 51907 / DSM 11121 / KW20 / Rd).